The following is a 1444-amino-acid chain: Probable chitinase LysM18 (1444 aa).

2 consecutive LysM domains span residues 256 to 302 (STVQ…HFCC) and 321 to 369 (TTYT…IICL). The Chitin-binding type-1 domain occupies 382–450 (NAECGPQVPG…TNGCISNCGT (69 aa)). 4 cysteine pairs are disulfide-bonded: Cys385–Cys413, Cys407–Cys419, Cys412–Cys426, and Cys444–Cys448. A GH18 domain is found at 461 to 831 (YRKVGFYEGF…STSWTKFTSD (371 aa)). Catalysis depends on Glu582, which acts as the Proton donor. The chitin site is built by Tyr583 and Trp808.

Belongs to the glycosyl hydrolase 18 family. Chitinase class V subfamily.

It carries out the reaction Random endo-hydrolysis of N-acetyl-beta-D-glucosaminide (1-&gt;4)-beta-linkages in chitin and chitodextrins.. In terms of biological role, probable chitinase involved in the degradation of chitin, a component of the cell walls of fungi and exoskeletal elements of some animals (including worms and arthropods). Might be involved in manipulation of host defenses for successful infection. This chain is Probable chitinase LysM18, found in Penicillium expansum (Blue mold rot fungus).